The primary structure comprises 401 residues: Cartilage-associated protein (401 aa).

A signal peptide spans 1–26 (MEPGRRGAAALLALLCVACALRAGRA). N-linked (GlcNAc...) asparagine glycans are attached at residues asparagine 87 and asparagine 363.

The protein belongs to the leprecan family. As to expression, found in articular chondrocytes. Expressed in a variety of tissues.

The protein resides in the secreted. It is found in the extracellular space. The protein localises to the extracellular matrix. Its function is as follows. Necessary for efficient 3-hydroxylation of fibrillar collagen prolyl residues. This chain is Cartilage-associated protein (CRTAP), found in Homo sapiens (Human).